The chain runs to 88 residues: Translation initiation factor IF-1 2 (88 aa).

Residues 1–72 (MAKEELIEMQ…TKGRITFRHL (72 aa)) form the S1-like domain.

Belongs to the IF-1 family. Component of the 30S ribosomal translation pre-initiation complex which assembles on the 30S ribosome in the order IF-2 and IF-3, IF-1 and N-formylmethionyl-tRNA(fMet); mRNA recruitment can occur at any time during PIC assembly.

The protein localises to the cytoplasm. One of the essential components for the initiation of protein synthesis. Stabilizes the binding of IF-2 and IF-3 on the 30S subunit to which N-formylmethionyl-tRNA(fMet) subsequently binds. Helps modulate mRNA selection, yielding the 30S pre-initiation complex (PIC). Upon addition of the 50S ribosomal subunit IF-1, IF-2 and IF-3 are released leaving the mature 70S translation initiation complex. This is Translation initiation factor IF-1 2 from Acidovorax sp. (strain JS42).